Reading from the N-terminus, the 384-residue chain is Shufflon-specific DNA recombinase (384 aa).

The Core-binding (CB) domain maps to 9 to 96; it reads MSLSRALDKY…LLSSLFNIAR (88 aa). A Tyr recombinase domain is found at 118–284; sequence GRDRRLTSSE…RAWQLVSKLD (167 aa). Catalysis depends on residues arginine 155, lysine 180, histidine 235, arginine 238, and histidine 262. Residue tyrosine 271 is the O-(3'-phospho-DNA)-tyrosine intermediate of the active site.

It belongs to the 'phage' integrase family.

Its function is as follows. Shufflon-specific DNA recombinase. The protein is Shufflon-specific DNA recombinase (rci) of Escherichia coli.